We begin with the raw amino-acid sequence, 369 residues long: Gibberellin 3-beta-dioxygenase 2-3 (369 aa).

In terms of domain architecture, Fe2OG dioxygenase spans 205 to 306 (MTATMHLNWY…RISLGYFLGP (102 aa)). His229, Asp231, and His287 together coordinate Fe cation. Arg297 is an active-site residue.

This sequence belongs to the iron/ascorbate-dependent oxidoreductase family. GA3OX subfamily. Requires L-ascorbate as cofactor. Fe cation is required as a cofactor.

It carries out the reaction gibberellin A20 + 2-oxoglutarate + O2 = gibberellin A1 + succinate + CO2. In terms of biological role, converts the inactive gibberellin precursors GA9 and GA20 in the bioactives gibberellins GA4 and GA1. The protein is Gibberellin 3-beta-dioxygenase 2-3 (GA3ox2-3) of Triticum aestivum (Wheat).